A 293-amino-acid chain; its full sequence is Ribosomal RNA small subunit methyltransferase H (293 aa).

Residues 32–34 (GGH), aspartate 51, phenylalanine 78, aspartate 99, and glutamine 106 contribute to the S-adenosyl-L-methionine site. Residues 271–293 (PGTEEIRENPPSRSAKLRVAKRI) are disordered.

This sequence belongs to the methyltransferase superfamily. RsmH family.

It localises to the cytoplasm. The enzyme catalyses cytidine(1402) in 16S rRNA + S-adenosyl-L-methionine = N(4)-methylcytidine(1402) in 16S rRNA + S-adenosyl-L-homocysteine + H(+). Its function is as follows. Specifically methylates the N4 position of cytidine in position 1402 (C1402) of 16S rRNA. This is Ribosomal RNA small subunit methyltransferase H from Persephonella marina (strain DSM 14350 / EX-H1).